Reading from the N-terminus, the 78-residue chain is Acyl carrier protein (78 aa).

The Carrier domain occupies 2–77; that stretch reads SDIAERVKKI…DAIKFLEKNA (76 aa). Ser-37 bears the O-(pantetheine 4'-phosphoryl)serine mark.

It belongs to the acyl carrier protein (ACP) family. Post-translationally, 4'-phosphopantetheine is transferred from CoA to a specific serine of apo-ACP by AcpS. This modification is essential for activity because fatty acids are bound in thioester linkage to the sulfhydryl of the prosthetic group.

The protein resides in the cytoplasm. Its pathway is lipid metabolism; fatty acid biosynthesis. Its function is as follows. Carrier of the growing fatty acid chain in fatty acid biosynthesis. The polypeptide is Acyl carrier protein (Azorhizobium caulinodans (strain ATCC 43989 / DSM 5975 / JCM 20966 / LMG 6465 / NBRC 14845 / NCIMB 13405 / ORS 571)).